Reading from the N-terminus, the 160-residue chain is Transcription elongation factor GreA (160 aa).

Positions 49–77 (SEYQSAKDEQAFVEGRIQTLKNMIDNAEI) form a coiled coil.

The protein belongs to the GreA/GreB family.

In terms of biological role, necessary for efficient RNA polymerase transcription elongation past template-encoded arresting sites. The arresting sites in DNA have the property of trapping a certain fraction of elongating RNA polymerases that pass through, resulting in locked ternary complexes. Cleavage of the nascent transcript by cleavage factors such as GreA or GreB allows the resumption of elongation from the new 3'terminus. GreA releases sequences of 2 to 3 nucleotides. The polypeptide is Transcription elongation factor GreA (Leuconostoc mesenteroides subsp. mesenteroides (strain ATCC 8293 / DSM 20343 / BCRC 11652 / CCM 1803 / JCM 6124 / NCDO 523 / NBRC 100496 / NCIMB 8023 / NCTC 12954 / NRRL B-1118 / 37Y)).